The chain runs to 90 residues: UPF0367 protein SYNPCC7002_A0153 (90 aa).

Belongs to the UPF0367 family.

In Picosynechococcus sp. (strain ATCC 27264 / PCC 7002 / PR-6) (Agmenellum quadruplicatum), this protein is UPF0367 protein SYNPCC7002_A0153.